A 556-amino-acid polypeptide reads, in one-letter code: Formate--tetrahydrofolate ligase (556 aa).

An ATP-binding site is contributed by 65 to 72 (TPAGEGKT).

This sequence belongs to the formate--tetrahydrofolate ligase family.

It carries out the reaction (6S)-5,6,7,8-tetrahydrofolate + formate + ATP = (6R)-10-formyltetrahydrofolate + ADP + phosphate. Its pathway is one-carbon metabolism; tetrahydrofolate interconversion. The sequence is that of Formate--tetrahydrofolate ligase from Clostridium acidurici (Gottschalkia acidurici).